A 161-amino-acid chain; its full sequence is 3-isopropylmalate dehydratase small subunit (161 aa).

It belongs to the LeuD family. LeuD type 2 subfamily. In terms of assembly, heterodimer of LeuC and LeuD.

It carries out the reaction (2R,3S)-3-isopropylmalate = (2S)-2-isopropylmalate. The protein operates within amino-acid biosynthesis; L-leucine biosynthesis; L-leucine from 3-methyl-2-oxobutanoate: step 2/4. Its function is as follows. Catalyzes the isomerization between 2-isopropylmalate and 3-isopropylmalate, via the formation of 2-isopropylmaleate. In Clostridium botulinum (strain Eklund 17B / Type B), this protein is 3-isopropylmalate dehydratase small subunit.